The following is a 262-amino-acid chain: Apolipoprotein A-I-2 (262 aa).

Residues 1 to 18 form the signal peptide; the sequence is MQFLALALTILLAAATQA. Residues 32 to 63 are 3 X approximate tandem repeats; it reads VKVAMMEYMAQVKETAQRSIDHLDDTEYKEYK. Repeat copies occupy residues 64–85 and 87–107. The interval 64–262 is 10 X approximate tandem repeats; sequence VQLSQSLDNL…YETISQAMKA (199 aa). The stretch at 108-118 is one 3; half-length repeat; that stretch reads KDVEELRSQLE. 5 repeat units span residues 119–140, 141–162, 163–184, 185–206, and 207–228. One copy of the 9; half-length repeat lies at 229–239; it reads PLTTDFKGQLG. The stretch at 240–262 is repeat 10; that stretch reads PAAEQAKEKLMALYETISQAMKA.

It belongs to the apolipoprotein A1/A4/E family.

The protein resides in the secreted. Its function is as follows. Participates in the reverse transport of cholesterol from tissues to the liver for excretion by promoting cholesterol efflux from tissues and by acting as a cofactor for the lecithin cholesterol acyltransferase (LCAT). The polypeptide is Apolipoprotein A-I-2 (Oncorhynchus mykiss (Rainbow trout)).